Here is a 164-residue protein sequence, read N- to C-terminus: NADH-quinone oxidoreductase subunit I 2 (164 aa).

2 consecutive 4Fe-4S ferredoxin-type domains span residues isoleucine 39–alanine 71 and glutamate 81–aspartate 110. Cysteine 51, cysteine 54, cysteine 57, cysteine 61, cysteine 90, cysteine 93, cysteine 96, and cysteine 100 together coordinate [4Fe-4S] cluster.

The protein belongs to the complex I 23 kDa subunit family. NDH-1 is composed of 14 different subunits. Subunits NuoA, H, J, K, L, M, N constitute the membrane sector of the complex. It depends on [4Fe-4S] cluster as a cofactor.

The protein resides in the cell inner membrane. The enzyme catalyses a quinone + NADH + 5 H(+)(in) = a quinol + NAD(+) + 4 H(+)(out). NDH-1 shuttles electrons from NADH, via FMN and iron-sulfur (Fe-S) centers, to quinones in the respiratory chain. The immediate electron acceptor for the enzyme in this species is believed to be ubiquinone. Couples the redox reaction to proton translocation (for every two electrons transferred, four hydrogen ions are translocated across the cytoplasmic membrane), and thus conserves the redox energy in a proton gradient. The sequence is that of NADH-quinone oxidoreductase subunit I 2 from Cereibacter sphaeroides (strain ATCC 17023 / DSM 158 / JCM 6121 / CCUG 31486 / LMG 2827 / NBRC 12203 / NCIMB 8253 / ATH 2.4.1.) (Rhodobacter sphaeroides).